We begin with the raw amino-acid sequence, 303 residues long: Hydroxyethylthiazole kinase (303 aa).

Polar residues predominate over residues 1–15 (MTTASTTPNSDTSNL). The tract at residues 1–23 (MTTASTTPNSDTSNLHEVAPDDP) is disordered. Substrate is bound at residue Met-67. ATP contacts are provided by Arg-142 and Ser-206. Gly-233 contributes to the substrate binding site.

This sequence belongs to the Thz kinase family. Requires Mg(2+) as cofactor.

It carries out the reaction 5-(2-hydroxyethyl)-4-methylthiazole + ATP = 4-methyl-5-(2-phosphooxyethyl)-thiazole + ADP + H(+). Its pathway is cofactor biosynthesis; thiamine diphosphate biosynthesis; 4-methyl-5-(2-phosphoethyl)-thiazole from 5-(2-hydroxyethyl)-4-methylthiazole: step 1/1. Its function is as follows. Catalyzes the phosphorylation of the hydroxyl group of 4-methyl-5-beta-hydroxyethylthiazole (THZ). The sequence is that of Hydroxyethylthiazole kinase from Bifidobacterium animalis subsp. lactis (strain AD011).